Here is a 297-residue protein sequence, read N- to C-terminus: Urease accessory protein UreD 2 (297 aa).

Belongs to the UreD family. UreD, UreF and UreG form a complex that acts as a GTP-hydrolysis-dependent molecular chaperone, activating the urease apoprotein by helping to assemble the nickel containing metallocenter of UreC. The UreE protein probably delivers the nickel.

Its subcellular location is the cytoplasm. In terms of biological role, required for maturation of urease via the functional incorporation of the urease nickel metallocenter. This is Urease accessory protein UreD 2 from Methylorubrum populi (strain ATCC BAA-705 / NCIMB 13946 / BJ001) (Methylobacterium populi).